The following is a 75-amino-acid chain: UPF0270 protein PFLU_4323 (75 aa).

Belongs to the UPF0270 family.

In Pseudomonas fluorescens (strain SBW25), this protein is UPF0270 protein PFLU_4323.